The following is a 613-amino-acid chain: Dihydroxy-acid dehydratase (613 aa).

Asp81 contacts Mg(2+). [2Fe-2S] cluster is bound at residue Cys122. Residues Asp123 and Lys124 each contribute to the Mg(2+) site. Lys124 carries the N6-carboxylysine modification. Cys195 lines the [2Fe-2S] cluster pocket. Mg(2+) is bound at residue Glu491. Ser517 functions as the Proton acceptor in the catalytic mechanism.

This sequence belongs to the IlvD/Edd family. Homodimer. It depends on [2Fe-2S] cluster as a cofactor. The cofactor is Mg(2+).

The catalysed reaction is (2R)-2,3-dihydroxy-3-methylbutanoate = 3-methyl-2-oxobutanoate + H2O. It catalyses the reaction (2R,3R)-2,3-dihydroxy-3-methylpentanoate = (S)-3-methyl-2-oxopentanoate + H2O. The protein operates within amino-acid biosynthesis; L-isoleucine biosynthesis; L-isoleucine from 2-oxobutanoate: step 3/4. It participates in amino-acid biosynthesis; L-valine biosynthesis; L-valine from pyruvate: step 3/4. Its function is as follows. Functions in the biosynthesis of branched-chain amino acids. Catalyzes the dehydration of (2R,3R)-2,3-dihydroxy-3-methylpentanoate (2,3-dihydroxy-3-methylvalerate) into 2-oxo-3-methylpentanoate (2-oxo-3-methylvalerate) and of (2R)-2,3-dihydroxy-3-methylbutanoate (2,3-dihydroxyisovalerate) into 2-oxo-3-methylbutanoate (2-oxoisovalerate), the penultimate precursor to L-isoleucine and L-valine, respectively. The protein is Dihydroxy-acid dehydratase of Vibrio vulnificus (strain YJ016).